Consider the following 150-residue polypeptide: Cell division protein SepF (150 aa).

It belongs to the SepF family. In terms of assembly, homodimer. Interacts with FtsZ.

Its subcellular location is the cytoplasm. Its function is as follows. Cell division protein that is part of the divisome complex and is recruited early to the Z-ring. Probably stimulates Z-ring formation, perhaps through the cross-linking of FtsZ protofilaments. Its function overlaps with FtsA. This chain is Cell division protein SepF, found in Clostridium botulinum (strain Kyoto / Type A2).